A 159-amino-acid chain; its full sequence is Ribosome maturation factor RimP (159 aa).

It belongs to the RimP family.

The protein resides in the cytoplasm. In terms of biological role, required for maturation of 30S ribosomal subunits. The polypeptide is Ribosome maturation factor RimP (Geobacter metallireducens (strain ATCC 53774 / DSM 7210 / GS-15)).